Here is an 88-residue protein sequence, read N- to C-terminus: Apolipoprotein C-I (88 aa).

Positions methionine 1–alanine 26 are cleaved as a signal peptide.

The protein belongs to the apolipoprotein C1 family.

It is found in the secreted. In terms of biological role, inhibitor of lipoprotein binding to the low density lipoprotein (LDL) receptor, LDL receptor-related protein, and very low density lipoprotein (VLDL) receptor. Associates with high density lipoproteins (HDL) and the triacylglycerol-rich lipoproteins in the plasma and makes up about 10% of the protein of the VLDL and 2% of that of HDL. Appears to interfere directly with fatty acid uptake and is also the major plasma inhibitor of cholesteryl ester transfer protein (CETP). Modulates the interaction of APOE with beta-migrating VLDL and inhibits binding of beta-VLDL to the LDL receptor-related protein. Binds free fatty acids and reduces their intracellular esterification. The chain is Apolipoprotein C-I (APOC1) from Mesocricetus auratus (Golden hamster).